We begin with the raw amino-acid sequence, 257 residues long: Imidazole glycerol phosphate synthase subunit HisF (257 aa).

Active-site residues include aspartate 12 and aspartate 131.

The protein belongs to the HisA/HisF family. As to quaternary structure, heterodimer of HisH and HisF.

Its subcellular location is the cytoplasm. The enzyme catalyses 5-[(5-phospho-1-deoxy-D-ribulos-1-ylimino)methylamino]-1-(5-phospho-beta-D-ribosyl)imidazole-4-carboxamide + L-glutamine = D-erythro-1-(imidazol-4-yl)glycerol 3-phosphate + 5-amino-1-(5-phospho-beta-D-ribosyl)imidazole-4-carboxamide + L-glutamate + H(+). It participates in amino-acid biosynthesis; L-histidine biosynthesis; L-histidine from 5-phospho-alpha-D-ribose 1-diphosphate: step 5/9. Its function is as follows. IGPS catalyzes the conversion of PRFAR and glutamine to IGP, AICAR and glutamate. The HisF subunit catalyzes the cyclization activity that produces IGP and AICAR from PRFAR using the ammonia provided by the HisH subunit. The sequence is that of Imidazole glycerol phosphate synthase subunit HisF from Rhodococcus jostii (strain RHA1).